A 484-amino-acid polypeptide reads, in one-letter code: UDP-N-acetylmuramate--L-alanine ligase (484 aa).

128-134 (GTHGKTT) contacts ATP.

This sequence belongs to the MurCDEF family.

It localises to the cytoplasm. The enzyme catalyses UDP-N-acetyl-alpha-D-muramate + L-alanine + ATP = UDP-N-acetyl-alpha-D-muramoyl-L-alanine + ADP + phosphate + H(+). It participates in cell wall biogenesis; peptidoglycan biosynthesis. Its function is as follows. Cell wall formation. This is UDP-N-acetylmuramate--L-alanine ligase from Shewanella loihica (strain ATCC BAA-1088 / PV-4).